Here is an 87-residue protein sequence, read N- to C-terminus: Small ribosomal subunit protein uS17 (87 aa).

It belongs to the universal ribosomal protein uS17 family. As to quaternary structure, part of the 30S ribosomal subunit.

In terms of biological role, one of the primary rRNA binding proteins, it binds specifically to the 5'-end of 16S ribosomal RNA. The protein is Small ribosomal subunit protein uS17 of Staphylococcus aureus (strain JH1).